The chain runs to 454 residues: Keratin, type I cuticular Ha5 (454 aa).

The head stretch occupies residues 1–97 (MASKCLKASF…FGEGILTGNE (97 aa)). Residues 97 to 407 (EKETMQFLND…GLLDSEDCKL (311 aa)) enclose the IF rod domain. The tract at residues 98–125 (KETMQFLNDRLASYLEKCGSWSGRTRSW) is coil 1A. The interval 134–142 (SNSALPVPD) is linker 1. A coil 1B region spans residues 143-243 (YQSYFQTIEE…HEEEVNSLRC (101 aa)). The tract at residues 244–259 (QLGDRLNVEVDAAPPV) is linker 12. A coil 2 region spans residues 260–403 (DLNRVLNEMR…NTYRGLLDSE (144 aa)). Residues 404 to 454 (DCKLPCNPCAPDHSPSKSCLPCLPAASCGPGMARTTCSPRPICVPCPGSRF) are tail.

The protein belongs to the intermediate filament family.

This chain is Keratin, type I cuticular Ha5, found in Bos taurus (Bovine).